Consider the following 232-residue polypeptide: Ribonuclease 3 (232 aa).

The region spanning 6 to 133 (FNDIENRLGV…VIAAVYLDKG (128 aa)) is the RNase III domain. Glu46 serves as a coordination point for Mg(2+). The active site involves Asp50. 2 residues coordinate Mg(2+): Asp119 and Glu122. The active site involves Glu122. A DRBM domain is found at 160–229 (DFKTKLQELL…AKEALKRLEK (70 aa)).

This sequence belongs to the ribonuclease III family. Homodimer. Requires Mg(2+) as cofactor.

Its subcellular location is the cytoplasm. The enzyme catalyses Endonucleolytic cleavage to 5'-phosphomonoester.. Digests double-stranded RNA. Involved in the processing of primary rRNA transcript to yield the immediate precursors to the large and small rRNAs (23S and 16S). Processes some mRNAs, and tRNAs when they are encoded in the rRNA operon. Processes pre-crRNA and tracrRNA of type II CRISPR loci if present in the organism. This is Ribonuclease 3 from Clostridium botulinum (strain Eklund 17B / Type B).